Reading from the N-terminus, the 158-residue chain is NAD(P)H-quinone oxidoreductase subunit J, chloroplastic (158 aa).

Belongs to the complex I 30 kDa subunit family. In terms of assembly, NDH is composed of at least 16 different subunits, 5 of which are encoded in the nucleus.

It localises to the plastid. The protein resides in the chloroplast thylakoid membrane. The enzyme catalyses a plastoquinone + NADH + (n+1) H(+)(in) = a plastoquinol + NAD(+) + n H(+)(out). The catalysed reaction is a plastoquinone + NADPH + (n+1) H(+)(in) = a plastoquinol + NADP(+) + n H(+)(out). NDH shuttles electrons from NAD(P)H:plastoquinone, via FMN and iron-sulfur (Fe-S) centers, to quinones in the photosynthetic chain and possibly in a chloroplast respiratory chain. The immediate electron acceptor for the enzyme in this species is believed to be plastoquinone. Couples the redox reaction to proton translocation, and thus conserves the redox energy in a proton gradient. In Ceratophyllum demersum (Rigid hornwort), this protein is NAD(P)H-quinone oxidoreductase subunit J, chloroplastic.